Consider the following 405-residue polypeptide: Argininosuccinate synthase (405 aa).

ATP contacts are provided by residues 13 to 21 (AYSGGLDTS) and Ala40. 2 residues coordinate L-citrulline: Tyr91 and Ser96. An ATP-binding site is contributed by Gly121. 3 residues coordinate L-aspartate: Thr123, Asn127, and Asp128. Asn127 is a binding site for L-citrulline. Residues Arg131, Ser182, Ser191, Glu267, and Tyr279 each contribute to the L-citrulline site.

Belongs to the argininosuccinate synthase family. Type 1 subfamily. In terms of assembly, homotetramer.

The protein localises to the cytoplasm. It catalyses the reaction L-citrulline + L-aspartate + ATP = 2-(N(omega)-L-arginino)succinate + AMP + diphosphate + H(+). Its pathway is amino-acid biosynthesis; L-arginine biosynthesis; L-arginine from L-ornithine and carbamoyl phosphate: step 2/3. The chain is Argininosuccinate synthase from Rhizobium meliloti (strain 1021) (Ensifer meliloti).